The sequence spans 854 residues: Leucine--tRNA ligase (854 aa).

A disordered region spans residues 1-32 (MARRDMAAETMDPRASTEPSPNEPREPARYDH). Basic and acidic residues predominate over residues 23–32 (EPREPARYDH). The 'HIGH' region signature appears at 69–80 (PYPSGSGLHVGH). Residues 633–637 (KMSKS) carry the 'KMSKS' region motif. Lys-636 contacts ATP.

This sequence belongs to the class-I aminoacyl-tRNA synthetase family.

Its subcellular location is the cytoplasm. It carries out the reaction tRNA(Leu) + L-leucine + ATP = L-leucyl-tRNA(Leu) + AMP + diphosphate. The protein is Leucine--tRNA ligase of Sorangium cellulosum (strain So ce56) (Polyangium cellulosum (strain So ce56)).